The sequence spans 272 residues: Bifunctional protein FolD 2 (272 aa).

NADP(+)-binding positions include 157–159 (GRS), Thr-182, and Ile-223.

It belongs to the tetrahydrofolate dehydrogenase/cyclohydrolase family. As to quaternary structure, homodimer.

It carries out the reaction (6R)-5,10-methylene-5,6,7,8-tetrahydrofolate + NADP(+) = (6R)-5,10-methenyltetrahydrofolate + NADPH. The catalysed reaction is (6R)-5,10-methenyltetrahydrofolate + H2O = (6R)-10-formyltetrahydrofolate + H(+). It participates in one-carbon metabolism; tetrahydrofolate interconversion. Functionally, catalyzes the oxidation of 5,10-methylenetetrahydrofolate to 5,10-methenyltetrahydrofolate and then the hydrolysis of 5,10-methenyltetrahydrofolate to 10-formyltetrahydrofolate. The polypeptide is Bifunctional protein FolD 2 (Syntrophomonas wolfei subsp. wolfei (strain DSM 2245B / Goettingen)).